The sequence spans 868 residues: Alanine--tRNA ligase (868 aa).

Zn(2+) is bound by residues histidine 553, histidine 557, cysteine 657, and histidine 661. The tract at residues 831-851 (GGKGGGRADMAQAGGSRPQAL) is disordered.

It belongs to the class-II aminoacyl-tRNA synthetase family. Zn(2+) is required as a cofactor.

It is found in the cytoplasm. It catalyses the reaction tRNA(Ala) + L-alanine + ATP = L-alanyl-tRNA(Ala) + AMP + diphosphate. Its function is as follows. Catalyzes the attachment of alanine to tRNA(Ala) in a two-step reaction: alanine is first activated by ATP to form Ala-AMP and then transferred to the acceptor end of tRNA(Ala). Also edits incorrectly charged Ser-tRNA(Ala) and Gly-tRNA(Ala) via its editing domain. The polypeptide is Alanine--tRNA ligase (Chromohalobacter salexigens (strain ATCC BAA-138 / DSM 3043 / CIP 106854 / NCIMB 13768 / 1H11)).